A 58-amino-acid polypeptide reads, in one-letter code: MSEVRVKENESLDSALKRFKRQCAKAGVLAEVRKREHYESPSVRRKKKSEAARKRRYK.

The disordered stretch occupies residues 35–58 (REHYESPSVRRKKKSEAARKRRYK). Over residues 43–58 (VRRKKKSEAARKRRYK) the composition is skewed to basic residues.

The protein belongs to the bacterial ribosomal protein bS21 family.

This Acetivibrio thermocellus (strain ATCC 27405 / DSM 1237 / JCM 9322 / NBRC 103400 / NCIMB 10682 / NRRL B-4536 / VPI 7372) (Clostridium thermocellum) protein is Small ribosomal subunit protein bS21.